Here is a 203-residue protein sequence, read N- to C-terminus: Enterotoxin-like toxin X (203 aa).

The tract at residues Y164–E180 is sialic acid-binding motif.

It belongs to the staphylococcal/streptococcal toxin family.

The protein resides in the secreted. Plays a role in the inhibition of the host innate immune system. Inhibits phagocytosis and killing by human neutrophils by interacting with multiple neutrophil surface glycoproteins in a sialic acid-dependent manner. This is Enterotoxin-like toxin X from Staphylococcus aureus.